The following is a 144-amino-acid chain: Neuritin-B (144 aa).

An N-terminal signal peptide occupies residues 1–27; it reads MGLKLSGRYIFLVLAVHLAYLLQAVKA. Residue Ser114 is the site of GPI-anchor amidated serine attachment. Positions 115 to 144 are cleaved as a propeptide — removed in mature form; that stretch reads TGAPGPRLLFPAFLPLLIVFLSALLNWVLQ.

It belongs to the neuritin family.

The protein localises to the cell membrane. Modulates postsynaptic dendritic arbor elaboration and synaptic maturation. This chain is Neuritin-B (nrn1-b), found in Xenopus laevis (African clawed frog).